A 116-amino-acid chain; its full sequence is Small ribosomal subunit protein uS13 (116 aa).

The interval 88 to 116 is disordered; that stretch reads GSRHKKGLPVRGQHTKNNARTRKGPRKQA.

It belongs to the universal ribosomal protein uS13 family. Part of the 30S ribosomal subunit. Forms a loose heterodimer with protein S19. Forms two bridges to the 50S subunit in the 70S ribosome.

In terms of biological role, located at the top of the head of the 30S subunit, it contacts several helices of the 16S rRNA. In the 70S ribosome it contacts the 23S rRNA (bridge B1a) and protein L5 of the 50S subunit (bridge B1b), connecting the 2 subunits; these bridges are implicated in subunit movement. Contacts the tRNAs in the A and P-sites. This Finegoldia magna (strain ATCC 29328 / DSM 20472 / WAL 2508) (Peptostreptococcus magnus) protein is Small ribosomal subunit protein uS13.